The chain runs to 476 residues: 4-(hydroxymethyl)benzenesulfonate dehydrogenase TsaD1 (476 aa).

Residues 154–155 (WN), 178–181 (KAAE), and 230–231 (GS) contribute to the NAD(+) site. Glu-252 (proton acceptor) is an active-site residue. Leu-253 lines the NAD(+) pocket. The active-site Nucleophile is the Cys-286. Glu-380 contributes to the NAD(+) binding site.

This sequence belongs to the aldehyde dehydrogenase family. Homodimer.

It carries out the reaction 4-(hydroxymethyl)benzenesulfonate + NAD(+) = 4-formylbenzenesulfonate + NADH + H(+). Its function is as follows. Involved in the toluene-4-sulfonate degradation pathway. Does not discriminate between the sulfonate and the carboxyl substituents and can also be involved in the p-toluenecarboxylate degradation pathway. This chain is 4-(hydroxymethyl)benzenesulfonate dehydrogenase TsaD1 (tsaD1), found in Comamonas testosteroni (Pseudomonas testosteroni).